Consider the following 164-residue polypeptide: Thiol peroxidase (164 aa).

A Thioredoxin domain is found at 17-162 (IKVGDTFPDF…YDEVLQAAQA (146 aa)). Cys58 acts as the Cysteine sulfenic acid (-SOH) intermediate in catalysis. A disulfide bond links Cys58 and Cys92.

This sequence belongs to the peroxiredoxin family. Tpx subfamily. Homodimer.

The catalysed reaction is a hydroperoxide + [thioredoxin]-dithiol = an alcohol + [thioredoxin]-disulfide + H2O. Its function is as follows. Thiol-specific peroxidase that catalyzes the reduction of hydrogen peroxide and organic hydroperoxides to water and alcohols, respectively. Plays a role in cell protection against oxidative stress by detoxifying peroxides. The chain is Thiol peroxidase from Clostridium acetobutylicum (strain ATCC 824 / DSM 792 / JCM 1419 / IAM 19013 / LMG 5710 / NBRC 13948 / NRRL B-527 / VKM B-1787 / 2291 / W).